The following is a 768-amino-acid chain: Multidomain esterase (768 aa).

A signal peptide spans 1-40; sequence MKKHFVVGETIKRFLRIGTSLALSISTLSLLPSAPRLSSA. Residues 41-264 form an acetylxylan esterase region; the sequence is AGTIKIMPLG…YWLEQIEGYL (224 aa). The Nucleophile; for acetylxylan esterase activity role is filled by Ser68. Residues Asp240 and His243 each act as for acetylxylan esterase activity in the active site. A compositionally biased stretch (low complexity) spans 267-283; it reads SDGPQQTQPTQPSQGDS. Positions 267–289 are disordered; sequence SDGPQQTQPTQPSQGDSGPELIY. The Dockerin domain occupies 285–352; the sequence is PELIYGDLDG…IIGKIKEFTV (68 aa). Residues 353-768 form a glucuronoyl esterase region; sequence AEKTVTEKPV…ADTFASKWLY (416 aa). A GXSYXG catalytic site motif motif is present at residues 563 to 568; sequence GVSRYG. Ser565 functions as the Nucleophile; for glucuronoyl esterase activity in the catalytic mechanism. Residues Lys569, Glu633, and Trp679 each coordinate substrate.

This sequence in the N-terminal section; belongs to the carbohydrate esterase 3 (CE3) family. In the C-terminal section; belongs to the carbohydrate esterase 15 (CE15) family.

The protein resides in the secreted. It catalyses the reaction Deacetylation of xylans and xylo-oligosaccharides.. The catalysed reaction is a 4-O-methyl-alpha-D-glucuronosyl ester derivative + H2O = 4-O-methyl-alpha-D-glucuronate derivative + an alcohol + H(+). Its pathway is glycan degradation; xylan degradation. Its function is as follows. Esterase involved in the degradation of plant cell wall polysaccharides. Catalyzes the deacetylation of chemically acetylated xylan and native, steam-extracted xylan. Seems to act in synergy with the xylanase XynD which produces xylo-oligosaccharides. Also catalyzes the deesterification of methyl esters of 4-O-methyl-D-glucuronic acid (MeGlcA) side residues in synthetic glucuronoxylan methyl ester, suggesting that it may be able to cleave ester linkages between MeGlcA carboxyl and more complex alcohols, including linkages between hemicellulose and lignin alcohols in plant cell walls. The chain is Multidomain esterase from Ruminococcus flavefaciens.